The primary structure comprises 284 residues: Nucleotide-binding protein Shewmr7_3352 (284 aa).

An ATP-binding site is contributed by glycine 8 to serine 15. Residue aspartate 56–asparagine 59 coordinates GTP.

The protein belongs to the RapZ-like family.

In terms of biological role, displays ATPase and GTPase activities. This Shewanella sp. (strain MR-7) protein is Nucleotide-binding protein Shewmr7_3352.